Consider the following 474-residue polypeptide: Glutathione synthetase (474 aa).

N-acetylalanine is present on Ala-2. Arg-125 contacts substrate. Glu-144 serves as a coordination point for ATP. Mg(2+)-binding residues include Glu-144 and Asn-146. Residues 148–151, 214–216, Gln-220, and 267–270 each bind substrate; these read ISAS, ERN, and RDGY. ATP contacts are provided by residues Lys-305, 364-373, Tyr-375, and 398-401; these read KPQREGGGNN and MEKI. Glu-368 contacts Mg(2+). Ser-415 is modified (phosphoserine). Glu-425 is an ATP binding site. Position 450 (Arg-450) interacts with substrate. Residues Lys-452 and Asp-458 each contribute to the ATP site. 461–462 serves as a coordination point for substrate; the sequence is VA.

Belongs to the eukaryotic GSH synthase family. In terms of assembly, homodimer. It depends on Mg(2+) as a cofactor.

The enzyme catalyses gamma-L-glutamyl-L-cysteine + glycine + ATP = glutathione + ADP + phosphate + H(+). The catalysed reaction is gamma-L-glutamyl-(2S)-2-aminobutanoate + glycine + ATP = ophthalmate + ADP + phosphate + H(+). Its pathway is sulfur metabolism; glutathione biosynthesis; glutathione from L-cysteine and L-glutamate: step 2/2. Catalyzes the production of glutathione from gamma-glutamylcysteine and glycine in an ATP-dependent manner. Glutathione (gamma-glutamylcysteinylglycine, GSH) is the most abundant intracellular thiol in living aerobic cells and is required for numerous processes including the protection of cells against oxidative damage, amino acid transport, the detoxification of foreign compounds, the maintenance of protein sulfhydryl groups in a reduced state and acts as a cofactor for a number of enzymes. Participates in ophthalmate biosynthesis in hepatocytes. This Homo sapiens (Human) protein is Glutathione synthetase.